A 512-amino-acid chain; its full sequence is Inositol-3-phosphate synthase (512 aa).

NAD(+)-binding residues include G72, G73, N74, N75, D145, I182, Q192, R195, T232, G233, N234, T235, G283, S284, D308, S311, N342, N343, D344, K357, G395, D396, D424, and S425.

It belongs to the myo-inositol 1-phosphate synthase family. NAD(+) serves as cofactor.

Its subcellular location is the cytoplasm. The protein localises to the cytosol. It localises to the nucleus. It catalyses the reaction D-glucose 6-phosphate = 1D-myo-inositol 3-phosphate. It functions in the pathway polyol metabolism; myo-inositol biosynthesis; myo-inositol from D-glucose 6-phosphate: step 1/2. Key enzyme in myo-inositol biosynthesis pathway that catalyzes the conversion of glucose 6-phosphate to 1-myo-inositol 1-phosphate in a NAD-dependent manner. In Mesembryanthemum crystallinum (Common ice plant), this protein is Inositol-3-phosphate synthase.